Consider the following 212-residue polypeptide: External core antigen (212 aa).

Positions 1 to 19 (MQLFHLCLIISCTCPTVQA) are cleaved as a signal peptide. The HBEAG stretch occupies residues 25-27 (GWL). Residues 165 to 212 (NAPILSTLPETTVVRRRGRSPRRRTPSPRRRRSQSPRRRRSQSRESQC) form a disordered region. The segment covering 178 to 205 (VRRRGRSPRRRTPSPRRRRSQSPRRRRS) has biased composition (basic residues). Residues 184–190 (SPRRRTP) form a 1; half-length repeat. Positions 184 to 206 (SPRRRTPSPRRRRSQSPRRRRSQ) are 3 X 8 AA repeats of S-P-R-R-R-R-S-Q. A propeptide spanning residues 184 to 212 (SPRRRTPSPRRRRSQSPRRRRSQSRESQC) is cleaved from the precursor. 2 consecutive repeat copies span residues 191–198 (SPRRRRSQ) and 199–206 (SPRRRRSQ).

The protein belongs to the orthohepadnavirus precore antigen family. Homodimerizes. Post-translationally, phosphorylated. Cleaved by host furin.

The protein localises to the secreted. Its subcellular location is the host nucleus. Functionally, may regulate immune response to the intracellular capsid in acting as a T-cell tolerogen, by having an immunoregulatory effect which prevents destruction of infected cells by cytotoxic T-cells. This immune regulation may predispose to chronicity during perinatal infections and prevent severe liver injury during adult infections. The chain is External core antigen from Hepatitis B virus genotype D subtype ayw (isolate Italy/CI/1992) (HBV-D).